The sequence spans 121 residues: MIQQETFLNVADNSGAKRIQCIRVLGSNRRYAHVGDIIVAAVKDAMPNMSVKKSDVVKAVIVRTKATLRRETGNSIRFDDNAAVIINDDKNPKGTRVFGPVARELRERNFTKIVSLAPEVI.

This sequence belongs to the universal ribosomal protein uL14 family. Part of the 50S ribosomal subunit.

It localises to the plastid. The protein localises to the organellar chromatophore. Its function is as follows. Binds to 23S rRNA. The chain is Large ribosomal subunit protein uL14c from Paulinella chromatophora.